The primary structure comprises 781 residues: MAVLAYNLGKREINQYFSIKNAKLLAAAAVVLLTVFHAASRHYGSSDTCDWLLSSGRFLGDNVWQPYGCMLHKYKSTEAKFCLREKRIAFVGDSRIRQLFYSFIKMMNPEVKEVGNKHENIPFVDGDSTVNFLWYAEVNNSLKEQLMLWTEGSASKPHVIIIGAATWSIKLHNGKSEALFQYKANLTAIADTLEKLAEHSEVYWVLQDPVYEDVLSESRKMITNEQINLYNEAAVSTLNTSKKKVKFLEASRQAAMETISQSVDGLHLPESTRDVGAMVLMNSMCNKILKPIDGSCCQSAPPLSVLQKLAAAVLLVSVVCFVLLGFSSHRKSRPAPDVESGEEKKHPAAVGQLNPKGPLLAIGKMSLIMLYFYLCDRADIFMKEQKFYTHSAFFIPLIYIFVLGVFYSENSKETKLLNREQTDEWKGWMQLVILIYHISGASAFIPVYMHVRVLVAAYLFQTGYGHFSFFWLKGDFGLYRVCQVLFRLNFLVVVLCLVMDRPYQFYYFVPLVTFWFAVIYATMALWPQILQKQANGSAFWNLALLLKLLGLLLFIGFFAYSQELFEGIFSVWPLSKLFELQGSIHEWWFRWKLDRFAVVNGMLFAFIYLLLQKYQLLSEGKGEPLFSNKISNCLLFVSVVSFMTYSIWASGCKNKSECNEMHPYISVILAFILIRNIPGYARSLYSSFFAWFGKISLELFICQYHIWLAADTKGILVLIPGNPTLNIIVSTFIFVCVAHEISQITNDLAQVAIPKESGPLLKRLLGAGVFLVLVLTLSQKD.

Residues Met1–Gln15 lie on the Cytoplasmic side of the membrane. Residues Tyr16–Phe36 form a helical membrane-spanning segment. Topologically, residues His37–Lys308 are lumenal. The active-site Acyl-ester intermediate is the Ser94. Residues Asn139, Asn185, and Asn239 are each glycosylated (N-linked (GlcNAc...) asparagine). Catalysis depends on residues Asp264 and His267. Residues Leu309–His329 traverse the membrane as a helical segment. Positions Arg330 to Val350 are disordered. The Cytoplasmic segment spans residues Arg330–Asn354. The helical transmembrane segment at Pro355–Cys375 threads the bilayer. The Lumenal portion of the chain corresponds to Asp376–Lys386. Residues Phe387–Tyr407 traverse the membrane as a helical segment. The Cytoplasmic portion of the chain corresponds to Ser408 to Gln430. Residues Leu431–Val451 traverse the membrane as a helical segment. Position 452 (Arg452) is a topological domain, lumenal. A helical transmembrane segment spans residues Val453–Lys473. Over Gly474–Gly477 the chain is Cytoplasmic. The helical transmembrane segment at Leu478–Val498 threads the bilayer. The Lumenal portion of the chain corresponds to Met499–Gln504. Residues Phe505–Leu525 form a helical membrane-spanning segment. The Cytoplasmic segment spans residues Trp526 to Ser537. The chain crosses the membrane as a helical span at residues Ala538–Phe558. At Ala559–Arg595 the chain is on the lumenal side. Residues Phe596–Leu616 traverse the membrane as a helical segment. The Cytoplasmic portion of the chain corresponds to Leu617 to Lys629. The helical transmembrane segment at Ile630–Ser650 threads the bilayer. Residues Gly651 to Glu660 lie on the Lumenal side of the membrane. A glycan (N-linked (GlcNAc...) asparagine) is linked at Asn654. The helical transmembrane segment at Met661–Ala681 threads the bilayer. The Cytoplasmic portion of the chain corresponds to Arg682–Ser687. Residues Phe688–Leu708 form a helical membrane-spanning segment. At Ala709–Gly714 the chain is on the lumenal side. A helical transmembrane segment spans residues Ile715–Val735. Topologically, residues Cys736–Glu756 are cytoplasmic. A helical transmembrane segment spans residues Ser757–Leu777. The Lumenal segment spans residues Ser778–Asp781.

The protein belongs to the PC-esterase family. CASD1 subfamily.

The protein resides in the golgi apparatus membrane. The catalysed reaction is CMP-N-acetyl-beta-neuraminate + acetyl-CoA = CMP-N-acetyl-9-O-acetyl-beta-neuraminate + CoA. It catalyses the reaction a ganglioside GD3 (d18:1(4E)) + acetyl-CoA = a ganglioside Ac-O-7-GD3(d18:1(4E)) + CoA. It carries out the reaction CMP-N-acetyl-beta-neuraminate + acetyl-CoA = CMP-N-acetyl-7-O-acetyl-beta-neuraminate + CoA. Its function is as follows. Key enzyme in the biosynthesis of O-acetylated (O-Ac) sialoglycans such as gangliosides O-AcGD3 and O-AcGD2, which affect various processes such as cell-cell interactions, host-pathogen recognition. Catalyzes the transfer of an acetyl group from a donor, the acetyl-coenzyme-A molecule (acetyl-CoA), to the C7/8/9 OH-position of a sialic acid residue. The primary site of O-acetyl group transfer on sialic acid seems to depend on cell type and can be C7, from which the O-acetyl group could subsequently migrate to the C8 and then to the C9 position, or at C9 with possibility of migrating to the C8 and then to the C7 position. Together with ST8SIA1 (GD3 synthase) it increases the levels of ganglioside Ac-O-7-GD3. Can transfer the acetyl group from acetyl-CoA to free sialate (N-acetylneuraminate, Neu5Ac) in vitro, but has preferred substrate specificity for CMP-activated sialate (CMP-Neu5Ac), resulting in the formation of 9-O-acetylated CMP-Neu5Ac (CMP-Neu5,9Ac2). CMP-Neu5,9Ac2 may be used by sialyltransferases as a sialate donor for glycoconjugate acceptors such as ganglioside GD3. O-acetylation at position C9 of ganglioside GD3 can counteract the pro-apoptotic effects of the ganglioside GD3 in tumor cells. In Danio rerio (Zebrafish), this protein is N-acetylneuraminate (7)9-O-acetyltransferase.